The sequence spans 158 residues: Transcription elongation factor GreA (158 aa).

The stretch at 47–74 (AEYHAAKEEQSHNEGRIAELEDKLARAD) forms a coiled coil.

This sequence belongs to the GreA/GreB family.

In terms of biological role, necessary for efficient RNA polymerase transcription elongation past template-encoded arresting sites. The arresting sites in DNA have the property of trapping a certain fraction of elongating RNA polymerases that pass through, resulting in locked ternary complexes. Cleavage of the nascent transcript by cleavage factors such as GreA or GreB allows the resumption of elongation from the new 3'terminus. GreA releases sequences of 2 to 3 nucleotides. The protein is Transcription elongation factor GreA of Nitrobacter winogradskyi (strain ATCC 25391 / DSM 10237 / CIP 104748 / NCIMB 11846 / Nb-255).